A 20-amino-acid chain; its full sequence is Lysozyme (20 aa).

As to quaternary structure, monomer.

The protein localises to the secreted. The catalysed reaction is Hydrolysis of (1-&gt;4)-beta-linkages between N-acetylmuramic acid and N-acetyl-D-glucosamine residues in a peptidoglycan and between N-acetyl-D-glucosamine residues in chitodextrins.. Has bacteriolytic activity. The sequence is that of Lysozyme from Lysobacter sp. (strain XL1).